The sequence spans 151 residues: Probable cGMP 3',5'-cyclic phosphodiesterase subunit delta (151 aa).

The protein belongs to the PDE6D/unc-119 family. Interacts with Pde6.

It localises to the nucleus. The protein localises to the cytoplasm. The protein is Probable cGMP 3',5'-cyclic phosphodiesterase subunit delta of Drosophila virilis (Fruit fly).